The sequence spans 72 residues: UPF0154 protein BLi02038/BL02936 (72 aa).

The chain crosses the membrane as a helical span at residues 4–24 (WVVILVGVLALLAGVALGFFI).

This sequence belongs to the UPF0154 family.

The protein localises to the cell membrane. This is UPF0154 protein BLi02038/BL02936 from Bacillus licheniformis (strain ATCC 14580 / DSM 13 / JCM 2505 / CCUG 7422 / NBRC 12200 / NCIMB 9375 / NCTC 10341 / NRRL NRS-1264 / Gibson 46).